Reading from the N-terminus, the 312-residue chain is Non-structural protein 12A (312 aa).

Low complexity predominate over residues 1-23; that stretch reads MFKSGSGSLKRSGSISSVKSFSG. 3 disordered regions span residues 1–37, 63–97, and 114–162; these read MFKS…RGSV, VPEK…YNQN, and KGRG…TGDG. Basic and acidic residues predominate over residues 63–73; the sequence is VPEKTKSEGNL. The segment covering 74-97 has biased composition (polar residues); sequence KNKSSVITGNFESSGPTNAHYNQN. Positions 122–134 are enriched in basic and acidic residues; the sequence is DARHTATDSRLSQ.

Belongs to the phytoreovirus non-structural protein Pns12A family.

The protein resides in the host cytoplasm. In terms of biological role, constituent of viral factories. The polypeptide is Non-structural protein 12A (Rice dwarf virus (isolate Fujian) (RDV)).